The following is a 341-amino-acid chain: Phenylalanine--tRNA ligase alpha subunit (341 aa).

Glutamate 254 provides a ligand contact to Mg(2+).

The protein belongs to the class-II aminoacyl-tRNA synthetase family. Phe-tRNA synthetase alpha subunit type 1 subfamily. Tetramer of two alpha and two beta subunits. It depends on Mg(2+) as a cofactor.

The protein resides in the cytoplasm. The enzyme catalyses tRNA(Phe) + L-phenylalanine + ATP = L-phenylalanyl-tRNA(Phe) + AMP + diphosphate + H(+). The sequence is that of Phenylalanine--tRNA ligase alpha subunit (pheS) from Mycoplasma genitalium (strain ATCC 33530 / DSM 19775 / NCTC 10195 / G37) (Mycoplasmoides genitalium).